Here is an 89-residue protein sequence, read N- to C-terminus: Small ribosomal subunit protein uS17 (89 aa).

It belongs to the universal ribosomal protein uS17 family. Part of the 30S ribosomal subunit.

Its function is as follows. One of the primary rRNA binding proteins, it binds specifically to the 5'-end of 16S ribosomal RNA. The protein is Small ribosomal subunit protein uS17 of Paracidovorax citrulli (strain AAC00-1) (Acidovorax citrulli).